The sequence spans 217 residues: Dense granule protein 1 (217 aa).

A signal peptide spans 1–19 (MARQATFIVALCVCGLAIA). Positions 171 to 183 (VASEDSALGNSEE) are enriched in polar residues. The tract at residues 171 to 217 (VASEDSALGNSEEQYVEGTVNGSSDPEQERAGGPLIPEGDEQEVDTE) is disordered. An N-linked (GlcNAc...) asparagine glycan is attached at N191. Over residues 208–217 (EGDEQEVDTE) the composition is skewed to acidic residues.

This sequence belongs to the Gra7 family.

It localises to the secreted. This chain is Dense granule protein 1 (DG1), found in Neospora caninum (Coccidian parasite).